The chain runs to 95 residues: Small ribosomal subunit protein bS6 (95 aa).

Belongs to the bacterial ribosomal protein bS6 family.

In terms of biological role, binds together with bS18 to 16S ribosomal RNA. The polypeptide is Small ribosomal subunit protein bS6 (Acholeplasma laidlawii (strain PG-8A)).